Consider the following 146-residue polypeptide: Ribonuclease H (146 aa).

The region spanning 1–138 (MYAWTDGACR…ADALANRGID (138 aa)) is the RNase H type-1 domain. Mg(2+)-binding residues include Asp6, Glu44, Asp66, and Asp130.

This sequence belongs to the RNase H family. As to quaternary structure, monomer. It depends on Mg(2+) as a cofactor.

The protein resides in the cytoplasm. It carries out the reaction Endonucleolytic cleavage to 5'-phosphomonoester.. Functionally, endonuclease that specifically degrades the RNA of RNA-DNA hybrids. In Alkalilimnicola ehrlichii (strain ATCC BAA-1101 / DSM 17681 / MLHE-1), this protein is Ribonuclease H.